The sequence spans 207 residues: MSERLLVLVRHGQSEWNLKNLFTGWKDPDLTEQGVAEAREAGRKLKAQGLVFDVAYTSVLTRAQHTLDLILGELGQKGLPTEKNLALNERDYGDLSGLNKDDARKKWGEDQVLIWRRSYDVPPPGGESLKDTLARALPYYVQEILPSVLNGKRTLVAAHGNSLRALIMVLEKLSPEGILKRELATGVPIIYRLNADSTVASKLDLAG.

Residues 10-17 (RHGQSEWN), 23-24 (TG), R62, 89-92 (ERDY), K100, 116-117 (RR), and 160-161 (GN) each bind substrate. The active-site Tele-phosphohistidine intermediate is H11. The active-site Proton donor/acceptor is E89.

It belongs to the phosphoglycerate mutase family. BPG-dependent PGAM subfamily. As to quaternary structure, homodimer.

It carries out the reaction (2R)-2-phosphoglycerate = (2R)-3-phosphoglycerate. Its pathway is carbohydrate degradation; glycolysis; pyruvate from D-glyceraldehyde 3-phosphate: step 3/5. In terms of biological role, catalyzes the interconversion of 2-phosphoglycerate and 3-phosphoglycerate. This is 2,3-bisphosphoglycerate-dependent phosphoglycerate mutase from Bradyrhizobium diazoefficiens (strain JCM 10833 / BCRC 13528 / IAM 13628 / NBRC 14792 / USDA 110).